The chain runs to 1119 residues: MEIKRFGRIREVIPLPPLTEIQVESYRRALQADVPPEKRENVGIQAAFRETFPIEEEDKGKGGLVLDFLEYRLGEPPFPQDECREKDLTYQAPLYARLQLIHKDTGLIKEDEVFLGHIPLMTEDGSFIINGADRVIVSQIHRSPGVYFTPDPARPGRYIASIIPLPKRGPWIDLEVEPNGVVSMKVNKRKFPLVLLLRVLGYDQETLARELGAYGELVQGLMDESVFAMRPEEALIRLFTLLRPGDPPKRDKAVAYVYGLIADPRRYDLGEAGRYKAEEKLGIRLSGRTLARFEDGEFKDEVFLPTLRYLFALTAGVPGHEVDDIDHLGNRRIRTVGELMTDQFRVGLARLARGVRERMLMGSEDSLTPAKLVNSRPLEAAIREFFSRSQLSQFKDETNPLSSLRHKRRISALGPGGLTRERAGFDVRDVHRTHYGRICPVETPEGANIGLITSLAAYARVDELGFIRTPYRRVVGGVVTDEVVYMTATEEDRYTIAQANTPLEGNRIAAERVVARRKGEPVIVSPEEVEFMDVSPKQVFSVNTNLIPFLEHDDANRALMGSNMQTQAVPLIRAQAPVVMTGLEERVVRDSLAALYAEEDGEVAKVDGNRIVVRYEDGRLVEYPLRRFYRSNQGTALDQRPRVVVGQRVRKGDLLADGPASENGFLALGQNVLVAIMPFDGYNFEDAIVISEELLKRDFYTSIHIERYEIEARDTKLGPERITRDIPHLSEAALRDLDEEGVVRIGAEVKPGDILVGRTSFKGESEPTPEERLLRSIFGEKARDVKDTSLRVPPGEGGIVVRTVRLRRGDPGVELKPGVREVVRVYVAQKRKLQVGDKLANRHGNKGVVAKILPVEDMPHLPDGTPVDVILNPLGVPSRMNLGQILETHLGLAGYFLGQRYISPIFDGAKEPEIKELLAQAFEVYFGKRKGEGFGVDKREVEVLRRAEKLGLVTPGKPPEEQLKELFLQGKVVLYDGRTGEPIEGPIVVGQMFIMKLYHMVEDKMHARSTGPYSLITQQPLGGKAQFGGQRFGEMEVWALEAYGAAHTLQEMLTLKSDDIEGRNAAYEAIIKGEDVPEPSVPESFRVLVKELQALALDVQTLDEKDNPVDIFEGLASKR.

Belongs to the RNA polymerase beta chain family. In terms of assembly, the RNAP catalytic core consists of 2 alpha, 1 beta, 1 beta' and 1 omega subunit. When a sigma factor is associated with the core the holoenzyme is formed, which can initiate transcription.

It carries out the reaction RNA(n) + a ribonucleoside 5'-triphosphate = RNA(n+1) + diphosphate. DNA-dependent RNA polymerase catalyzes the transcription of DNA into RNA using the four ribonucleoside triphosphates as substrates. This is DNA-directed RNA polymerase subunit beta from Thermus thermophilus (strain ATCC BAA-163 / DSM 7039 / HB27).